We begin with the raw amino-acid sequence, 491 residues long: Regulatory protein NPR5 (491 aa).

One can recognise a BTB domain in the interval 26 to 116; sequence SDVTFSVEGR…LYSGQVSIVP (91 aa). The C2HC NPR-type zinc-finger motif lies at 122-136; that stretch reads RPNCGERGCWHTHCS. Zn(2+)-binding residues include cysteine 125, cysteine 130, histidine 132, and cysteine 135. 4 ANK repeats span residues 254–283, 284–313, 318–347, and 351–385; these read QKIR…LNLD, ESLA…DVNY, AGKT…DPNV, and GGIT…KLRL. Residues 400 to 491 form a disordered region; sequence EEGNNSNNQN…MYHHHHQHHF (92 aa). Residues 403-413 are compositionally biased toward low complexity; sequence NNSNNQNNDNN. A compositionally biased stretch (basic and acidic residues) spans 457–470; the sequence is DQGDDHNSQREGMS.

This sequence belongs to the plant 'ANKYRIN-BTB/POZ' family. 'NOOT-BOP-COCH-like' (NBCL) subfamily. As to quaternary structure, homodimer or heterodimer with BOP1. Interacts with PAN. As to expression, highly expressed in young floral meristem. Predominantly expressed in the boundary between floral meristem (FM) and sepal primordia.

The protein localises to the cytoplasm. It is found in the nucleus. The protein operates within protein modification; protein ubiquitination. Functionally, may act as a substrate-specific adapter of an E3 ubiquitin-protein ligase complex (CUL3-RBX1-BTB) which mediates the ubiquitination and subsequent proteasomal degradation of target proteins. Acts redundantly with BOP2. BOP1/2 promote leaf and floral meristem fate and determinacy in a pathway targeting AP1 and AGL24. BOP1/2 act as transcriptional co-regulators through direct interaction with TGA factors, including PAN, a direct regulator of AP1. Controls lateral organ fate through positive regulation of adaxial-abaxial polarity genes ATHB-14/PHB, YAB1/FIL and YAB3, and through positive regulation of LOB domain-containing genes LOB, LBD6/AS2 and LBD36. Promotes and maintains a developmentally determinate state in leaf cells through the negative regulation of JAG, JGL and class I KNOX genes. Is also involved in nectary development, formation of normal abscission zones (AZs) and suppression of bract formation, probably by regulating the cell wall disorganization. The sequence is that of Regulatory protein NPR5 from Arabidopsis thaliana (Mouse-ear cress).